Consider the following 1113-residue polypeptide: Protein translocase subunit SecA (1113 aa).

ATP is bound by residues glutamine 175, 193–197, and aspartate 694; that span reads GEGKT. Residues 1042-1072 are compositionally biased toward basic and acidic residues; sequence RHAAEQRTDMSKYRTQKDDIEAQQKAQRDAA. The segment at 1042–1113 is disordered; sequence RHAAEQRTDM…KFKQCHGRNL (72 aa). Zn(2+) contacts are provided by cysteine 1097, cysteine 1099, cysteine 1108, and histidine 1109. Positions 1103 to 1113 are enriched in basic residues; sequence KKFKQCHGRNL.

Belongs to the SecA family. Monomer and homodimer. Part of the essential Sec protein translocation apparatus which comprises SecA, SecYEG and auxiliary proteins SecDF. Other proteins may also be involved. Requires Zn(2+) as cofactor.

It is found in the cell inner membrane. Its subcellular location is the cytoplasm. It catalyses the reaction ATP + H2O + cellular proteinSide 1 = ADP + phosphate + cellular proteinSide 2.. Functionally, part of the Sec protein translocase complex. Interacts with the SecYEG preprotein conducting channel. Has a central role in coupling the hydrolysis of ATP to the transfer of proteins into and across the cell membrane, serving as an ATP-driven molecular motor driving the stepwise translocation of polypeptide chains across the membrane. The chain is Protein translocase subunit SecA from Porphyromonas gingivalis (strain ATCC 33277 / DSM 20709 / CIP 103683 / JCM 12257 / NCTC 11834 / 2561).